A 328-amino-acid chain; its full sequence is Sphingolipid delta(4)-desaturase DES1-like (328 aa).

Helical transmembrane passes span 50–70 (PLAF…ATLL), 78–98 (ILTV…LAIH), and 114–134 (WLGI…FQKY). The Histidine box-1 signature appears at 98-102 (HELSH). The short motif at 135–139 (HLEHH) is the Histidine box-2 element. 3 helical membrane passes run 164–184 (LSKS…PLFL), 192–212 (WEFT…YFFG), and 217–237 (AYLI…GHFI). Residues 266–270 (HNEHH) carry the Histidine box-3 motif.

It belongs to the fatty acid desaturase type 1 family. DEGS subfamily.

The protein localises to the endoplasmic reticulum membrane. The catalysed reaction is an N-acylsphinganine + 2 Fe(II)-[cytochrome b5] + O2 + 2 H(+) = an N-acylsphing-4-enine + 2 Fe(III)-[cytochrome b5] + 2 H2O. Its function is as follows. Sphingolipid-delta-4-desaturase required for the biosynthesis of delta-4-unsaturated sphingolipids and derivatives. This is Sphingolipid delta(4)-desaturase DES1-like from Oryza sativa subsp. japonica (Rice).